We begin with the raw amino-acid sequence, 112 residues long: uncharacterized protein (112 aa).

The protein resides in the plastid. It is found in the chloroplast. This is an uncharacterized protein from Chlamydomonas reinhardtii (Chlamydomonas smithii).